We begin with the raw amino-acid sequence, 64 residues long: Thrombin-like enzyme collinein-4 (64 aa).

2 disulfide bridges follow: cysteine 5/cysteine 23 and cysteine 34/cysteine 51.

As to quaternary structure, monomer. In terms of tissue distribution, expressed by the vanom gland.

It is found in the secreted. In terms of biological role, thrombin-like snake venom serine protease. This is Thrombin-like enzyme collinein-4 from Crotalus durissus collilineatus (Brazilian rattlesnake).